We begin with the raw amino-acid sequence, 309 residues long: MARSWLDYKTQAWVQWCPGCGDFGILNSIYRAVSELGIDPENLAVVGGIGCSGRTTYYVKGSNFHALHGRAIPVATGVKLANPHLNVIVAGGDGDLMGIGGGHFVALGRRNLNITVLLFDNAVYGLTKGQAAPTLPAWVKTKALSMPNIHDNINPVLLAFAAGYTFIARGYAYHTQQLKELIKTAVRHRGAALVDILQPCPTYNNIMTNKWYEERIYYVDQEEGYDPIIRTPEEFQKKAPAIAAKLMEFGDRIPLGILYWNQTRESFEERLEKIMPGYMSAPPATRRIELEGKPFLHPFDIFKDRLVTP.

[4Fe-4S] cluster is bound by residues Cys17, Cys20, and Cys51. Residues 49-52 (IGCS) and His68 contribute to the thiamine diphosphate site. Asp93 contributes to the Mg(2+) binding site. Residue 94–95 (GD) participates in thiamine diphosphate binding. The Mg(2+) site is built by Asn121 and Val123. 125–126 (GL) serves as a coordination point for thiamine diphosphate. Position 200 (Cys200) interacts with [4Fe-4S] cluster.

As to quaternary structure, heterodimer composed of an alpha and a beta subunit. The cofactor is [4Fe-4S] cluster. It depends on thiamine diphosphate as a cofactor. Requires Mg(2+) as cofactor.

The catalysed reaction is a 2-oxocarboxylate + 2 oxidized [2Fe-2S]-[ferredoxin] + CoA = an acyl-CoA + 2 reduced [2Fe-2S]-[ferredoxin] + CO2 + H(+). Its function is as follows. Catalyzes the coenzyme A-dependent oxidative decarboxylation of different 2-oxoacids such as pyruvate, 2-oxobutyrate, glyoxylate and 2-oxoglutarate to form their CoA derivatives. This chain is 2-oxoacid:ferredoxin oxidoreductase 2, subunit beta, found in Aeropyrum pernix (strain ATCC 700893 / DSM 11879 / JCM 9820 / NBRC 100138 / K1).